We begin with the raw amino-acid sequence, 626 residues long: uncharacterized protein (626 aa).

A helical membrane pass occupies residues 103-123; that stretch reads AGALLVKFFPLLLLYPLTYLA. A Protein kinase domain is found at 200–618; that stretch reads FENREPVGSG…DILEAARPFL (419 aa). Residues 206–214 and K311 each bind ATP; that span reads VGSGCVAQV. D445 acts as the Proton acceptor in catalysis.

This sequence belongs to the protein kinase superfamily. ADCK protein kinase family.

The protein resides in the mitochondrion. It localises to the membrane. The function of this protein is not yet clear. It is not known if it has protein kinase activity and what type of substrate it would phosphorylate (Ser, Thr or Tyr). Involved in the mitochondrial import of CoQ precursors, plays a role in muscle mitochondrial function and fatty acid beta-oxidation. This is an uncharacterized protein from Homo sapiens (Human).